The sequence spans 197 residues: Adenylate kinase (197 aa).

16–21 (GAGKGT) lines the ATP pocket. Residues 36–65 (STGDILRDHVARGTALGQQAGPLMEAGQLV) form an NMP region. AMP is bound by residues threonine 37, arginine 42, 63–65 (QLV), 90–93 (GFPR), and glutamine 97. An LID region spans residues 131-147 (DRGRQAVAEGRAPRADD). Arginine 132 contributes to the ATP binding site. The tract at residues 137–158 (VAEGRAPRADDNEETARKRQQV) is disordered. Residues 141–153 (RAPRADDNEETAR) are compositionally biased toward basic and acidic residues. AMP-binding residues include arginine 144 and arginine 155. Residue glycine 183 coordinates ATP.

The protein belongs to the adenylate kinase family. As to quaternary structure, monomer.

Its subcellular location is the cytoplasm. The catalysed reaction is AMP + ATP = 2 ADP. It functions in the pathway purine metabolism; AMP biosynthesis via salvage pathway; AMP from ADP: step 1/1. Its function is as follows. Catalyzes the reversible transfer of the terminal phosphate group between ATP and AMP. Plays an important role in cellular energy homeostasis and in adenine nucleotide metabolism. The sequence is that of Adenylate kinase from Deinococcus radiodurans (strain ATCC 13939 / DSM 20539 / JCM 16871 / CCUG 27074 / LMG 4051 / NBRC 15346 / NCIMB 9279 / VKM B-1422 / R1).